Reading from the N-terminus, the 186-residue chain is Dynactin subunit 3 (186 aa).

Ala-2 carries the N-acetylalanine modification.

It belongs to the dynactin subunit 3 family. Subunit of dynactin, a multiprotein complex part of a tripartite complex with dynein and a adapter, such as BICDL1, BICD2 or HOOK3. The dynactin complex is built around ACTR1A/ACTB filament and consists of an actin-related filament composed of a shoulder domain, a pointed end and a barbed end. Its length is defined by its flexible shoulder domain. The soulder is composed of 2 DCTN1 subunits, 4 DCTN2 and 2 DCTN3. The 4 DCNT2 (via N-terminus) bind the ACTR1A filament and act as molecular rulers to determine the length. The pointed end is important for binding dynein-dynactin cargo adapters. Consists of 4 subunits: ACTR10, DCNT4, DCTN5 and DCTN6. The barbed end is composed of a CAPZA1:CAPZB heterodimers, which binds ACTR1A/ACTB filament and dynactin and stabilizes dynactin.

The protein resides in the cytoplasm. The protein localises to the cytoskeleton. It localises to the microtubule organizing center. It is found in the centrosome. Its subcellular location is the chromosome. The protein resides in the centromere. The protein localises to the kinetochore. It localises to the spindle. It is found in the cleavage furrow. Its subcellular location is the midbody. In terms of biological role, part of the dynactin complex that activates the molecular motor dynein for ultra-processive transport along microtubules. Together with dynein is involved in spindle assembly and cytokinesis. The polypeptide is Dynactin subunit 3 (Sus scrofa (Pig)).